Consider the following 143-residue polypeptide: Root meristem growth factor 10 (143 aa).

Residues 1 to 27 form the signal peptide; sequence MDMLRSACFYFLLIVFVILSWSLLCDS. Residues 28–130 constitute a propeptide that is removed on maturation; that stretch reads RHLGHMEKKL…SDQEHPGFNL (103 aa). Residue Asn60 is glycosylated (N-linked (GlcNAc...) asparagine). A compositionally biased stretch (polar residues) spans 74-83; sequence NHGDNGQING. The disordered stretch occupies residues 74-143; that stretch reads NHGDNGQING…QPTTHPPHHN (70 aa). The Nuclear localization signal signature appears at 92–99; that stretch reads VKRASDKK. Tyr132 is modified (sulfotyrosine). The residue at position 140 (Pro140) is a Hydroxyproline.

This sequence belongs to the RGF family. Binds to LRR receptor-like serine/threonine-protein kinases RGI1, RGI2 and RGI3 to trigger their dimerization with SERK proteins and subsequent signaling. The tyrosine sulfation is critical for the function of the peptide. As to expression, expressed in root tips.

The protein resides in the secreted. It is found in the nucleus. Its function is as follows. Maintains the postembryonic root stem cell niche by regulating the expression levels and patterns of the transcription factor PLETHORA (PLT), mainly at the post-transcriptional level. Promotes root elongation. The polypeptide is Root meristem growth factor 10 (Arabidopsis thaliana (Mouse-ear cress)).